The primary structure comprises 290 residues: Carbonic anhydrase-related protein (290 aa).

Position 5 is a phosphoserine (S5). Positions 27 to 289 (VEWGYEEGVE…LSDRVIRAAF (263 aa)) constitute an Alpha-carbonic anhydrase domain. H87 acts as the Proton donor/acceptor in catalysis. 2 residues coordinate Zn(2+): H118 and H141.

Belongs to the alpha-carbonic anhydrase family.

Its function is as follows. Does not have a carbonic anhydrase catalytic activity. The sequence is that of Carbonic anhydrase-related protein (Ca8) from Rattus norvegicus (Rat).